The following is a 530-amino-acid chain: Zinc finger protein ZIC 4 (530 aa).

Basic residues-rich tracts occupy residues histidine 31–proline 40 and asparagine 97–alanine 113. Disordered stretches follow at residues histidine 31–proline 50 and proline 87–serine 138. A C2H2-type 1; atypical zinc finger spans residues leucine 284–histidine 317. A C2H2-type 2; atypical zinc finger spans residues histidine 326–histidine 353. 3 consecutive C2H2-type zinc fingers follow at residues phenylalanine 359–histidine 383, phenylalanine 389–histidine 413, and tyrosine 419–histidine 443. Residues histidine 432–phenylalanine 530 are disordered. A compositionally biased stretch (basic residues) spans serine 435–cysteine 444. 2 stretches are compositionally biased toward low complexity: residues serine 455–serine 467 and threonine 474–glutamine 485. The segment covering serine 520–phenylalanine 530 has biased composition (polar residues).

The protein belongs to the GLI C2H2-type zinc-finger protein family. As to expression, at mid-gastrula stage (stage 11.5), weakly expressed in the prospective neural fold. Expressed in the neural plate border region at early neurula stage (stage 15) with strongest expression in the prospective regions of the hyoid and branchial crests. Expression in the dorsal central nervous system (CNS) continues through late neurula stage and early tail bud stages with expression strongest in the olfactory placode and expression levels increasing as development progresses. Becomes expressed in somites.

It localises to the nucleus. Functionally, may bind to DNA. Induces neural and neural crest differentiation. Does not induce anterior neural tissue. This is Zinc finger protein ZIC 4 (zic4) from Xenopus laevis (African clawed frog).